A 331-amino-acid polypeptide reads, in one-letter code: Phosphate acyltransferase (331 aa).

Belongs to the PlsX family. Homodimer. Probably interacts with PlsY.

It is found in the cytoplasm. The enzyme catalyses a fatty acyl-[ACP] + phosphate = an acyl phosphate + holo-[ACP]. It functions in the pathway lipid metabolism; phospholipid metabolism. Its function is as follows. Catalyzes the reversible formation of acyl-phosphate (acyl-PO(4)) from acyl-[acyl-carrier-protein] (acyl-ACP). This enzyme utilizes acyl-ACP as fatty acyl donor, but not acyl-CoA. The sequence is that of Phosphate acyltransferase from Exiguobacterium sibiricum (strain DSM 17290 / CCUG 55495 / CIP 109462 / JCM 13490 / 255-15).